Here is a 458-residue protein sequence, read N- to C-terminus: ATP synthase subunit beta (458 aa).

Glycine 148–threonine 155 contacts ATP.

The protein belongs to the ATPase alpha/beta chains family. F-type ATPases have 2 components, CF(1) - the catalytic core - and CF(0) - the membrane proton channel. CF(1) has five subunits: alpha(3), beta(3), gamma(1), delta(1), epsilon(1). CF(0) has three main subunits: a(1), b(2) and c(9-12). The alpha and beta chains form an alternating ring which encloses part of the gamma chain. CF(1) is attached to CF(0) by a central stalk formed by the gamma and epsilon chains, while a peripheral stalk is formed by the delta and b chains.

It is found in the cell inner membrane. It carries out the reaction ATP + H2O + 4 H(+)(in) = ADP + phosphate + 5 H(+)(out). In terms of biological role, produces ATP from ADP in the presence of a proton gradient across the membrane. The catalytic sites are hosted primarily by the beta subunits. This Shewanella woodyi (strain ATCC 51908 / MS32) protein is ATP synthase subunit beta.